The chain runs to 638 residues: Methionine--tRNA ligase (638 aa).

The 'HIGH' region motif lies at 12 to 22; it reads YYPSDKLHIGH. The Zn(2+) site is built by Cys-127, Cys-130, Cys-144, and Cys-147. Residues 296 to 300 carry the 'KMSKS' region motif; the sequence is KMSKS. Residue Lys-299 coordinates ATP. Positions 538–638 constitute a tRNA-binding domain; it reads DFSKVQLRVA…KDIESGSKIS (101 aa).

It belongs to the class-I aminoacyl-tRNA synthetase family. MetG type 2A subfamily. Homodimer. Zn(2+) is required as a cofactor.

It is found in the cytoplasm. It carries out the reaction tRNA(Met) + L-methionine + ATP = L-methionyl-tRNA(Met) + AMP + diphosphate. Is required not only for elongation of protein synthesis but also for the initiation of all mRNA translation through initiator tRNA(fMet) aminoacylation. The protein is Methionine--tRNA ligase (metG) of Caldanaerobacter subterraneus subsp. tengcongensis (strain DSM 15242 / JCM 11007 / NBRC 100824 / MB4) (Thermoanaerobacter tengcongensis).